Here is a 411-residue protein sequence, read N- to C-terminus: Argininosuccinate synthase (411 aa).

Residues 15 to 23 (AYSGGLDTS) and A42 each bind ATP. L-citrulline-binding residues include Y93 and S98. Position 123 (G123) interacts with ATP. Residues T125, N129, and D130 each coordinate L-aspartate. N129 serves as a coordination point for L-citrulline. Residues R133, S185, S194, E270, and Y282 each contribute to the L-citrulline site.

This sequence belongs to the argininosuccinate synthase family. Type 1 subfamily. In terms of assembly, homotetramer.

It localises to the cytoplasm. The catalysed reaction is L-citrulline + L-aspartate + ATP = 2-(N(omega)-L-arginino)succinate + AMP + diphosphate + H(+). The protein operates within amino-acid biosynthesis; L-arginine biosynthesis; L-arginine from L-ornithine and carbamoyl phosphate: step 2/3. This chain is Argininosuccinate synthase, found in Psychrobacter sp. (strain PRwf-1).